The sequence spans 1921 residues: MWTNVFRIGGLHNVSWFQFLPSETELNPGFDRSSRAEQNEVATYLVLSSHLRLQKEGFLTTWTNSFVGPWDPSQGLYNPDEKIKLWLFLPGRHSSISDKAQAAVSKLRVVASGIWVAPGDSEEISVAFSQSLRNCIERALSGISYMRFGDVFSKFSPQSEEYLRRGQPTVEFIFAATEEAVFVHVIISAKNVRTLSSGDAERMLRSSLKNSSYRLPAFRKCLGLAKSEDNRLCYINTSHRPMLFPPVIVSPHGMRGSLTGFCPNDLVKQVYFSSGNLKTSTGYVGLPSHIGRGSRLINGNHCYVEVTLGCCQNRNDNTSQANSTFAVNLPHNQCPEPSVGSKDHRKGQSDLSSVCEKKFIYPAEAVLVPILQSAFAKFSLKRAGDFDCLGASENKSDGFYEKNGYNSSGSSRNSSISSTSSASSGSGWRMTSRTGDLDADADSLTCRQSGLTCNDDRLKMGSKRPRTGMAESFGQVGIENDQIGWDWDADDDDDDREVGMDIKALLSEFGDFGDFFENDALPFGEPPGTAESHVLVFPPDSADVGSSPVDMMDVSDQIVLPVGFSSFESFNPVPPIIDECLIKSQEVLHSSITSVPSNQMSISSTGEFDHLLKAEAMMTFAPEYGAVEAPMSEISSTFFKSPYLPKSHKVESSNSRTSNYVYGATPPTTDSDGAGDMILFGSKSCIGNNAGRTLYHSREHYTQVEGRKGRHDKLPTVISDNSSTKEGVSQSIHSKHSAANAVKVVQGKKTDGISAVVSTLLSSKTLLATDVGSVMFQAFMCRMRHIITSSKHSSPVSLTRLSGNFFLNQLSNEPSTLTDNISARNEIYKKDIPTRIAGDFDGGMLDSHMSAPVGVWRTVSVPKTAKPASSPNIEAGSSLPHSSFSEDSLLSYGQRQPLQDLLDGIALLVQQATSFVDLALDSDCGDGPYGWLALEELWRRELSCGPSAGHAGCGGTLASCHSLDIAGVKLVDPLSAEVFPSSVITLLQSDIKTALKSAFGQSDGPLSVTDWCKGRNQSGDGGSISEGFTAESALSEVNGVNISDDFIIDKYFGKQAVSNAIDGGKGDETAQSQDIYSSELLRPTLFVLPSPAILVGYQDDWLKISTNSLTHWEKAPFEPYALPKSINYAVVCPDIDPLTCAATDFFQQLGTGESTSLSFVKEVMLKHDRNWLGTHLPQSLGNQMEKDVGRLSSSGFVLLDCPQSMKIESNNTSLLGSLSDYFLSLSNGWNVNSYLKSLSKALKGLKLGSGLYTNQKEGSGSPCVVVYIVCPFPDPSAVLRTIVESSIALGSVIQSDRDRRSILNSQVARAFSSSTAVDEASISHIPVLSGFSVPKLVLQVVSVDSIFRITSPSFNELVILKDTAFSVYNKARRISRGMPNDAFFSSSLPSRSSSALTPMNSISGIWKDCGGSRMTGSTHPRDGEIDVSLRTSGWDTSTSWQIPRSGGLSCDPNRNGDFYLNDEIFYLFEPLFILSEPGSVERGVSPTFTSLGSESSKPIPEDGGRGSGPGMNSMEGITSGSSSQGDVSQLEGKAIPSLHCCYGWTEDWRWLVSIWTDARVLQQGCQILQACSSPDNGSFKPRDFVITRIGNFFELEYQEWQKAIYSAGGPEIKKWPIQLRRSAPSGIATNSNGSSLQQQDLSLIQERASSTSTLYSSHSKQSTFVKGSMGQSAGRKQIMGGQTISGTPRGLFQWVHSISFASISLDHSLHFVLPAELVSAGGGQSSTGMSSVNYIEGFTPVKSLGSTAFSYMMIPSPNMRFLHPSPLQLPTCLTAESPPLAHLLHSKGYAIPLSTGFVVSKAVPSMRKDSRINVKEEWPSVLSVSLIDYYGGYDNAHDKILQGIVKQGGGTKETRDFEVESHLILESIAAELHALSWMTVSPAYLDRRTALPFHCDMVLRLRRLLHFADKEVSRIPDKTGV.

Glycyl lysine isopeptide (Lys-Gly) (interchain with G-Cter in ubiquitin) cross-links involve residues Lys-220 and Lys-226. Disordered regions lie at residues 400–434, 702–724, and 1485–1528; these read YEKN…TSRT, TQVE…NSST, and SPTF…GDVS. Residues 407–427 show a composition bias toward low complexity; that stretch reads SSGSSRNSSISSTSSASSGSG. Polar residues-rich tracts occupy residues 1486 to 1496 and 1515 to 1527; these read PTFTSLGSESS and EGIT…QGDV.

It belongs to the Mediator complex subunit 13 family. Component of the Mediator complex. Interacts with CYCC1-2 (CDK8 homolog). As to expression, ubiquitous. Highest expression in the shoot apex.

It is found in the nucleus. Functionally, component of the Mediator complex, a coactivator involved in the regulated transcription of nearly all RNA polymerase II-dependent genes. Mediator functions as a bridge to convey information from gene-specific regulatory proteins to the basal RNA polymerase II transcription machinery. The Mediator complex, having a compact conformation in its free form, is recruited to promoters by direct interactions with regulatory proteins and serves for the assembly of a functional preinitiation complex with RNA polymerase II and the general transcription factors. Acts closely together with MAB12. Involved in the regulation of embryo patterning and cotyledon organogenesis. May act through transient repression of specific genes such as the ones responsive to auxin. This Arabidopsis thaliana (Mouse-ear cress) protein is Mediator of RNA polymerase II transcription subunit 13 (MED13).